A 219-amino-acid polypeptide reads, in one-letter code: Protein VERNALIZATION 2 (219 aa).

Positions 138-180 (REAKVMRYREKKKRRRYEKQIRYESRKAYAEMRPRVKGRFAKV) constitute a CCT domain.

In terms of tissue distribution, mainly expressed in leaves, and at low levels in the shoot apical meristem (SAM).

The protein resides in the nucleus. Involved in the regulation of vernalization; this process in essential for flowering in cv. Bd29-1 but seems do not occur in cv. Bd21. The protein is Protein VERNALIZATION 2 of Brachypodium distachyon (Purple false brome).